The following is a 461-amino-acid chain: Flavin-containing monooxygenase FMO GS-OX4 (461 aa).

17–22 (GAGAAG) contributes to the FAD binding site. 211–216 (GNFASG) serves as a coordination point for NADP(+).

It belongs to the FMO family.

The enzyme catalyses a (Z)-omega-(methylsulfanyl)-N-sulfo-alkylhydroximate S-glucoside + NADPH + O2 + H(+) = a (Z)-omega-(methylsulfinyl)-alkyl-glucosinolate + NADP(+) + H2O. Functionally, catalyzes the conversion of methylthioalkyl glucosinolates of any chain length into methylsulfinylalkyl glucosinolates. In Arabidopsis thaliana (Mouse-ear cress), this protein is Flavin-containing monooxygenase FMO GS-OX4 (FMOGS-OX4).